The primary structure comprises 464 residues: 3-deoxy-D-manno-octulosonic acid transferase (464 aa).

Residues 2–22 traverse the membrane as a helical; Signal-anchor segment; sequence MLLYYALSFILLPVYFIIILI. The region spanning 47–93 is the RPE1 insert domain; the sequence is DSLDFMQTSANKEEFKGDTSLRTTTYTLIREDEGLGSTYKLPLEASD. Glu107 functions as the Proton acceptor in the catalytic mechanism. Residues 311-312, 352-354, and 377-380 contribute to the CMP site; these read PR, FGE, and NILE.

This sequence belongs to the glycosyltransferase group 1 family. Glycosyltransferase 30 subfamily.

It localises to the cell inner membrane. The enzyme catalyses lipid IVA (E. coli) + CMP-3-deoxy-beta-D-manno-octulosonate = alpha-Kdo-(2-&gt;6)-lipid IVA (E. coli) + CMP + H(+). It functions in the pathway bacterial outer membrane biogenesis; LPS core biosynthesis. Its function is as follows. Involved in lipopolysaccharide (LPS) biosynthesis. Catalyzes the transfer of 3-deoxy-D-manno-octulosonate (Kdo) residue(s) from CMP-Kdo to lipid IV(A), the tetraacyldisaccharide-1,4'-bisphosphate precursor of lipid A. This chain is 3-deoxy-D-manno-octulosonic acid transferase (waaA), found in Rickettsia conorii (strain ATCC VR-613 / Malish 7).